A 425-amino-acid polypeptide reads, in one-letter code: 3-deoxy-D-manno-octulosonic acid transferase (425 aa).

Residues 3–23 traverse the membrane as a helical; Signal-anchor segment; the sequence is ELLYTALLYLIQPLIWIRLWV. The active-site Proton acceptor is glutamate 60. CMP-binding positions include 268–269, 309–311, and 335–338; these read PR, MGE, and NPLE.

This sequence belongs to the glycosyltransferase group 1 family. Glycosyltransferase 30 subfamily.

It is found in the cell inner membrane. It carries out the reaction lipid IVA (E. coli) + CMP-3-deoxy-beta-D-manno-octulosonate = alpha-Kdo-(2-&gt;6)-lipid IVA (E. coli) + CMP + H(+). It catalyses the reaction alpha-Kdo-(2-&gt;6)-lipid IVA (E. coli) + CMP-3-deoxy-beta-D-manno-octulosonate = alpha-Kdo-(2-&gt;4)-alpha-Kdo-(2-&gt;6)-lipid IVA (E. coli) + CMP + H(+). The protein operates within glycolipid biosynthesis; KDO(2)-lipid A biosynthesis; KDO(2)-lipid A from CMP-3-deoxy-D-manno-octulosonate and lipid IV(A): step 1/4. It functions in the pathway glycolipid biosynthesis; KDO(2)-lipid A biosynthesis; KDO(2)-lipid A from CMP-3-deoxy-D-manno-octulosonate and lipid IV(A): step 2/4. Its pathway is bacterial outer membrane biogenesis; LPS core biosynthesis. Involved in lipopolysaccharide (LPS) biosynthesis. Catalyzes the transfer of two 3-deoxy-D-manno-octulosonate (Kdo) residues from CMP-Kdo to lipid IV(A), the tetraacyldisaccharide-1,4'-bisphosphate precursor of lipid A. The chain is 3-deoxy-D-manno-octulosonic acid transferase (waaA) from Escherichia coli O157:H7.